A 361-amino-acid polypeptide reads, in one-letter code: Phospho-N-acetylmuramoyl-pentapeptide-transferase (361 aa).

Helical transmembrane passes span 26–46 (SILA…VLIQ), 73–93 (TMGG…WGDL), 98–118 (VWLV…DDWI), 139–159 (IFGL…AAVT), 168–188 (IALP…IVGF), 200–220 (GLAI…AYAS), 237–257 (AGDL…FLWF), 264–284 (VFMG…IAVI), 289–309 (LVLV…IIQV), and 339–359 (VIVR…ATLK).

This sequence belongs to the glycosyltransferase 4 family. MraY subfamily. It depends on Mg(2+) as a cofactor.

The protein localises to the cell inner membrane. It carries out the reaction UDP-N-acetyl-alpha-D-muramoyl-L-alanyl-gamma-D-glutamyl-meso-2,6-diaminopimeloyl-D-alanyl-D-alanine + di-trans,octa-cis-undecaprenyl phosphate = di-trans,octa-cis-undecaprenyl diphospho-N-acetyl-alpha-D-muramoyl-L-alanyl-D-glutamyl-meso-2,6-diaminopimeloyl-D-alanyl-D-alanine + UMP. It participates in cell wall biogenesis; peptidoglycan biosynthesis. Functionally, catalyzes the initial step of the lipid cycle reactions in the biosynthesis of the cell wall peptidoglycan: transfers peptidoglycan precursor phospho-MurNAc-pentapeptide from UDP-MurNAc-pentapeptide onto the lipid carrier undecaprenyl phosphate, yielding undecaprenyl-pyrophosphoryl-MurNAc-pentapeptide, known as lipid I. In Xylella fastidiosa (strain M12), this protein is Phospho-N-acetylmuramoyl-pentapeptide-transferase.